The primary structure comprises 253 residues: Large ribosomal subunit protein uL10m (253 aa).

A mitochondrion-targeting transit peptide spans 1-24 (MANLMQRSLPLTTTRTPVLQFLRF).

This sequence belongs to the universal ribosomal protein uL10 family. Component of the mitochondrial ribosome large subunit (39S) which comprises a 16S rRNA and about 50 distinct proteins.

The protein resides in the mitochondrion. The sequence is that of Large ribosomal subunit protein uL10m (mRpL10) from Drosophila pseudoobscura pseudoobscura (Fruit fly).